The chain runs to 224 residues: Ras-related protein Rab-11C (224 aa).

17-24 is a GTP binding site; that stretch reads GDSAVGKS. The Effector region motif lies at 39–47; sequence TKATIGVDF. GTP-binding positions include 65–69 and 123–126; these read DTAGQ and NKSD. The interval 194-224 is disordered; sequence QGKKLTPLSDPAPQLTANTTSTHQEKKSGCC. 2 S-geranylgeranyl cysteine lipidation sites follow: Cys-223 and Cys-224.

Belongs to the small GTPase superfamily. Rab family.

The protein resides in the membrane. This Dictyostelium discoideum (Social amoeba) protein is Ras-related protein Rab-11C (rab11C).